Consider the following 73-residue polypeptide: Alpha-bungarotoxin N3 (73 aa).

Cystine bridges form between Cys-3–Cys-23, Cys-16–Cys-43, Cys-28–Cys-32, Cys-47–Cys-58, and Cys-59–Cys-64.

This sequence belongs to the three-finger toxin family. Long-chain subfamily. Type II alpha-neurotoxin sub-subfamily. Monomer in solution, homodimer in crystal state. Expressed by the venom gland.

It is found in the secreted. Binds with high affinity to muscular (alpha-1/CHRNA1) and neuronal (alpha-7/CHRNA7) nicotinic acetylcholine receptor (nAChR) and inhibits acetylcholine from binding to the receptor, thereby impairing neuromuscular and neuronal transmission. Mice injected with this toxin develop flaccid paralysis followed by death. Irreversibly inhibits twitches in a concentration-dependent manner in rat phrenic nerve-hemidiaphragm and chick biventer cervicis muscle. The protein is Alpha-bungarotoxin N3 of Bungarus candidus (Malayan krait).